The chain runs to 280 residues: MSERLFVLSQHILPKLALTRLAGRFADWKGGGITTAAIRRFIARYNVDMGEAADSDPAAYATFNDFFTRALKPGVRPVADARLVCPVDGAVSQLGAIDSGRIFQAKGRDYSATALLAGDADLAARFADGHFATIYLSPRDYHRIHMPCAGRLLEMTYVPGDLYSVNPATARGVDRLFARNERVVCVFEDEQSQPFVMVLVGATIVGSMATVWHGVVNPPRRPAVEKWDYRGQDIRLAKGEEMGRFLLGSTVVLLYPAGPLKFNPQWQAASPVRMGEAMAS.

Active-site charge relay system; for autoendoproteolytic cleavage activity residues include Asp-88, His-145, and Ser-249. Ser-249 acts as the Schiff-base intermediate with substrate; via pyruvic acid; for decarboxylase activity in catalysis. At Ser-249 the chain carries Pyruvic acid (Ser); by autocatalysis.

It belongs to the phosphatidylserine decarboxylase family. PSD-B subfamily. Prokaryotic type I sub-subfamily. In terms of assembly, heterodimer of a large membrane-associated beta subunit and a small pyruvoyl-containing alpha subunit. The cofactor is pyruvate. In terms of processing, is synthesized initially as an inactive proenzyme. Formation of the active enzyme involves a self-maturation process in which the active site pyruvoyl group is generated from an internal serine residue via an autocatalytic post-translational modification. Two non-identical subunits are generated from the proenzyme in this reaction, and the pyruvate is formed at the N-terminus of the alpha chain, which is derived from the carboxyl end of the proenzyme. The autoendoproteolytic cleavage occurs by a canonical serine protease mechanism, in which the side chain hydroxyl group of the serine supplies its oxygen atom to form the C-terminus of the beta chain, while the remainder of the serine residue undergoes an oxidative deamination to produce ammonia and the pyruvoyl prosthetic group on the alpha chain. During this reaction, the Ser that is part of the protease active site of the proenzyme becomes the pyruvoyl prosthetic group, which constitutes an essential element of the active site of the mature decarboxylase.

The protein resides in the cell membrane. It carries out the reaction a 1,2-diacyl-sn-glycero-3-phospho-L-serine + H(+) = a 1,2-diacyl-sn-glycero-3-phosphoethanolamine + CO2. Its pathway is phospholipid metabolism; phosphatidylethanolamine biosynthesis; phosphatidylethanolamine from CDP-diacylglycerol: step 2/2. Its function is as follows. Catalyzes the formation of phosphatidylethanolamine (PtdEtn) from phosphatidylserine (PtdSer). The chain is Phosphatidylserine decarboxylase proenzyme from Chromobacterium violaceum (strain ATCC 12472 / DSM 30191 / JCM 1249 / CCUG 213 / NBRC 12614 / NCIMB 9131 / NCTC 9757 / MK).